A 322-amino-acid polypeptide reads, in one-letter code: Digestive cysteine proteinase 1 (322 aa).

The first 16 residues, 1–16, serve as a signal peptide directing secretion; that stretch reads MKVVALFLFGLALAAA. Residues 17–105 constitute a propeptide, activation peptide; it reads NPSWEEFKGK…VFTSTDAAPE (89 aa). Disulfide bonds link Cys126-Cys170, Cys160-Cys203, and Cys262-Cys311. Cys129 is an active-site residue. Catalysis depends on residues His269 and Asn289.

It belongs to the peptidase C1 family.

With respect to regulation, inhibited by E-64, antipain, leupeptin, heavy metal ions, iodoacetic acid, dithionitrobenzene, p-hydroxymercuri-benzoate; activated by mercaptoethanol and dithiothreitol. The protein is Digestive cysteine proteinase 1 (LCP1) of Homarus americanus (American lobster).